We begin with the raw amino-acid sequence, 962 residues long: Putative RNA Helicase B962L (962 aa).

The Helicase ATP-binding domain occupies 43-229; sequence IPTSLADRVL…FGIGKENIIL (187 aa). 56-63 lines the ATP pocket; that stretch reads SRTGSGKS. The DEAH box signature appears at 167–170; it reads DEAH. The Helicase C-terminal domain maps to 253–459; that stretch reads ACETALTIHK…TIKKNKEGVF (207 aa). A helical transmembrane segment spans residues 521 to 541; the sequence is GYFWQAAISDIATILAVVSVA.

The protein belongs to the DEAD box helicase family. DEAH subfamily.

Its subcellular location is the host membrane. It is found in the virion. The catalysed reaction is ATP + H2O = ADP + phosphate + H(+). The sequence is that of Putative RNA Helicase B962L from African swine fever virus (isolate Tick/South Africa/Pretoriuskop Pr4/1996) (ASFV).